A 251-amino-acid polypeptide reads, in one-letter code: Triosephosphate isomerase (251 aa).

Substrate is bound at residue 9–11 (NWK). His-95 functions as the Electrophile in the catalytic mechanism. Residue Glu-167 is the Proton acceptor of the active site. Residues Gly-173, Ser-213, and 234–235 (GG) each bind substrate. The residue at position 213 (Ser-213) is a Phosphoserine.

The protein belongs to the triosephosphate isomerase family. Homodimer.

The protein localises to the cytoplasm. The enzyme catalyses D-glyceraldehyde 3-phosphate = dihydroxyacetone phosphate. Its pathway is carbohydrate biosynthesis; gluconeogenesis. It functions in the pathway carbohydrate degradation; glycolysis; D-glyceraldehyde 3-phosphate from glycerone phosphate: step 1/1. Functionally, involved in the gluconeogenesis. Catalyzes stereospecifically the conversion of dihydroxyacetone phosphate (DHAP) to D-glyceraldehyde-3-phosphate (G3P). The polypeptide is Triosephosphate isomerase (Halalkalibacterium halodurans (strain ATCC BAA-125 / DSM 18197 / FERM 7344 / JCM 9153 / C-125) (Bacillus halodurans)).